The sequence spans 291 residues: ATP synthase gamma chain (291 aa).

This sequence belongs to the ATPase gamma chain family. In terms of assembly, F-type ATPases have 2 components, CF(1) - the catalytic core - and CF(0) - the membrane proton channel. CF(1) has five subunits: alpha(3), beta(3), gamma(1), delta(1), epsilon(1). CF(0) has three main subunits: a, b and c.

Its subcellular location is the cell inner membrane. Functionally, produces ATP from ADP in the presence of a proton gradient across the membrane. The gamma chain is believed to be important in regulating ATPase activity and the flow of protons through the CF(0) complex. This chain is ATP synthase gamma chain, found in Roseobacter denitrificans (strain ATCC 33942 / OCh 114) (Erythrobacter sp. (strain OCh 114)).